We begin with the raw amino-acid sequence, 193 residues long: MGGEKAFSFIFLLFLCFFLANLSASSAHPPRQKLKQRIPCKQLVLYFHDVVYNGHNKANATASIVGAPQGADLVKLAGENHFGNVVVFDDPITLDNNFHSPPVGRAQGLYVYDKKDTFHSWLSFSFTLNTTMHQGTLIFMGADPILIKNRDITVVGGTGDFFMARGIATIATDSYEGEVYFRLKVDIKLYECW.

Positions 1-29 (MGGEKAFSFIFLLFLCFFLANLSASSAHP) are cleaved as a signal peptide. A disulfide bridge connects residues C40 and C192. N-linked (GlcNAc...) asparagine glycosylation is found at N59 and N129.

This sequence belongs to the plant dirigent protein family. Homodimer. Expressed in rhizomes, stems, and leaves.

The protein resides in the secreted. It is found in the extracellular space. The protein localises to the apoplast. It participates in aromatic compound metabolism; phenylpropanoid biosynthesis. Functionally, dirigent proteins impart stereoselectivity on the phenoxy radical-coupling reaction, yielding optically active lignans from two molecules of coniferyl alcohol in the biosynthesis of lignans, flavonolignans, and alkaloids and thus plays a central role in plant secondary metabolism. Also involved in the biosynthesis of etoposide, a chemotherapeutic compound of the topoisomerase inhibitor family. The sequence is that of Dirigent protein from Sinopodophyllum hexandrum (Himalayan may apple).